The primary structure comprises 168 residues: Pathogenesis-related protein 1B (168 aa).

A signal peptide spans 1 to 30; sequence MGFFLFSQMPSFFLVSTLLLFLIISHSSHA. An SCP domain is found at 38-156; it reads LDAHNTARAD…NGGYVVSCNY (119 aa).

It belongs to the CRISP family. Three disulfide bonds are present.

The protein resides in the vacuole. Functionally, probably involved in the defense reaction of plants against pathogens. This Nicotiana tabacum (Common tobacco) protein is Pathogenesis-related protein 1B.